The primary structure comprises 481 residues: F-box/LRR-repeat protein At3g03360 (481 aa).

Residues 1–28 (MEKESQENSTRPDASSTVFSSSKSTCAS) form a disordered region. Residues 14–28 (ASSTVFSSSKSTCAS) are compositionally biased toward low complexity. An F-box domain is found at 36–84 (GDLISRLPDDILQLILSYLPTRLAIKTSVLSRRWRHVWSDTWSLSFHRD). 5 LRR repeats span residues 118 to 145 (SRPD…SLYL), 196 to 221 (HCNI…LLFF), 295 to 320 (EADF…TLGA), 350 to 375 (ISRY…TIHP), and 413 to 439 (RRNV…ELIV).

This is F-box/LRR-repeat protein At3g03360 from Arabidopsis thaliana (Mouse-ear cress).